The sequence spans 216 residues: Cytochrome c biogenesis ATP-binding export protein CcmA (216 aa).

The region spanning 5 to 216 (ISVDTLLSAS…RKIRLDYRFV (212 aa)) is the ABC transporter domain. An ATP-binding site is contributed by 43–50 (GPNGAGKT).

This sequence belongs to the ABC transporter superfamily. CcmA exporter (TC 3.A.1.107) family. The complex is composed of two ATP-binding proteins (CcmA) and two transmembrane proteins (CcmB).

The protein resides in the cell inner membrane. It carries out the reaction heme b(in) + ATP + H2O = heme b(out) + ADP + phosphate + H(+). Part of the ABC transporter complex CcmAB involved in the biogenesis of c-type cytochromes; once thought to export heme, this seems not to be the case, but its exact role is uncertain. Responsible for energy coupling to the transport system. The chain is Cytochrome c biogenesis ATP-binding export protein CcmA from Shewanella oneidensis (strain ATCC 700550 / JCM 31522 / CIP 106686 / LMG 19005 / NCIMB 14063 / MR-1).